A 143-amino-acid polypeptide reads, in one-letter code: Crossover junction endodeoxyribonuclease Hjc (143 aa).

Glu-12 serves as a coordination point for Mg(2+). Residue Ser-32 is part of the active site. Mg(2+)-binding residues include Asp-42 and Glu-55.

The protein belongs to the Holliday junction resolvase Hjc family. As to quaternary structure, homodimer. The cofactor is Mg(2+).

The enzyme catalyses Endonucleolytic cleavage at a junction such as a reciprocal single-stranded crossover between two homologous DNA duplexes (Holliday junction).. Its function is as follows. A structure-specific endonuclease that resolves Holliday junction (HJ) intermediates during genetic recombination. Cleaves 4-way DNA junctions introducing paired nicks in opposing strands, leaving a 5'-terminal phosphate and a 3'-terminal hydroxyl group that are subsequently ligated to produce recombinant products. Hjc, Hjm (Hel308) and PINA coordinate HJ migration and cleavage of replication forks in a coordinated way. The sequence is that of Crossover junction endodeoxyribonuclease Hjc from Saccharolobus islandicus (strain REY15A) (Sulfolobus islandicus).